Here is a 280-residue protein sequence, read N- to C-terminus: uncharacterized protein (280 aa).

Basic residues predominate over residues 1 to 10 (MSSSIKKLKK). The segment at 1-45 (MSSSIKKLKKDTKDTDKTPSKKIYQETHNSEDSEDSEDSDNENNT) is disordered. The segment covering 11-31 (DTKDTDKTPSKKIYQETHNSE) has biased composition (basic and acidic residues). Residues 32–41 (DSEDSEDSDN) show a composition bias toward acidic residues.

This is an uncharacterized protein from Acanthamoeba polyphaga mimivirus (APMV).